Consider the following 494-residue polypeptide: MFS-type transporter lnaF (494 aa).

Residues 1-51 form a disordered region; sequence MTYDPENAMGEARADAPVEAEKEHEATQTTVKESTLGYDNSSDPSRRDSYR. Positions 12–26 are enriched in basic and acidic residues; that stretch reads ARADAPVEAEKEHEA. N-linked (GlcNAc...) asparagine glycosylation is found at N40, N58, and N68. 10 consecutive transmembrane segments (helical) span residues 105–125, 128–148, 156–176, 203–223, 228–248, 290–310, 323–343, 354–374, 383–403, and 446–466; these read SLLI…DMFS, AGLL…TLAL, MLWY…GEYP, TLMA…CLIA, LPVT…IIMV, LAFF…STII, AIWQ…GAWL, ILGF…FPHL, VLYG…IGLI, and STFY…WFLP.

Belongs to the major facilitator superfamily. Sugar transporter (TC 2.A.1.1) family.

It localises to the cell membrane. Functionally, MFS-type transporter; part of the lna gene cluster that mediates the biosynthesis of diastereomeric piperazines. Lna and lnb clusters encode sets of enzymes that produce overlapping sets of previously undescribed metabolites such as piperazinomycin-like metabolites or morpholine. The lna and lnb biosynthetic pathways appear to be part of a signaling network that controls the formation of sclerotia, a resilient overwintering structure. May be involved in the secretion of the metabolites produced by the lna and lnb clusters. The polypeptide is MFS-type transporter lnaF (Aspergillus flavus (strain ATCC 200026 / FGSC A1120 / IAM 13836 / NRRL 3357 / JCM 12722 / SRRC 167)).